The chain runs to 494 residues: Flap endonuclease 1 (494 aa).

An N-domain region spans residues 1–106 (MGIKGLIPFL…KTLEKRRQQR (106 aa)). Asp-34 serves as a coordination point for Mg(2+). Residues Arg-47 and Arg-72 each contribute to the DNA site. Positions 88, 160, 162, 181, and 183 each coordinate Mg(2+). An I-domain region spans residues 124 to 253 (SVKKLVGRTV…KTAYSLVKKY (130 aa)). DNA is bound at residue Glu-160. Positions 231 and 233 each coordinate DNA. Asp-233 contacts Mg(2+). Residues 330 to 338 (IQTSLLSFL) form an interaction with PCNA region. Disordered regions lie at residues 341–382 (PQHN…ESST) and 395–426 (LFCEPSNSDNEEDDRGRVDKNEDLFKKSENET). Residues 408–426 (DRGRVDKNEDLFKKSENET) show a composition bias toward basic and acidic residues.

The protein belongs to the XPG/RAD2 endonuclease family. FEN1 subfamily. As to quaternary structure, interacts with PCNA. Three molecules of FEN1 bind to one PCNA trimer with each molecule binding to one PCNA monomer. PCNA stimulates the nuclease activity without altering cleavage specificity. Requires Mg(2+) as cofactor. Post-translationally, phosphorylated. Phosphorylation upon DNA damage induces relocalization to the nuclear plasma.

The protein localises to the nucleus. The protein resides in the nucleolus. It localises to the nucleoplasm. It is found in the mitochondrion. Functionally, structure-specific nuclease with 5'-flap endonuclease and 5'-3' exonuclease activities involved in DNA replication and repair. During DNA replication, cleaves the 5'-overhanging flap structure that is generated by displacement synthesis when DNA polymerase encounters the 5'-end of a downstream Okazaki fragment. It enters the flap from the 5'-end and then tracks to cleave the flap base, leaving a nick for ligation. Also involved in the long patch base excision repair (LP-BER) pathway, by cleaving within the apurinic/apyrimidinic (AP) site-terminated flap. Acts as a genome stabilization factor that prevents flaps from equilibrating into structures that lead to duplications and deletions. Also possesses 5'-3' exonuclease activity on nicked or gapped double-stranded DNA, and exhibits RNase H activity. Also involved in replication and repair of rDNA and in repairing mitochondrial DNA. In Theileria parva (East coast fever infection agent), this protein is Flap endonuclease 1.